A 199-amino-acid polypeptide reads, in one-letter code: Phosphatidylethanolamine N-methyltransferase (199 aa).

At 1–12 (MSWLLGYMDPTE) the chain is on the lumenal side. Positions 13–33 (PSFVAAVITIVFNPLFWNVVA) form an intramembrane region, helical. At 34-45 (RWEQRTRKLSRA) the chain is on the lumenal side. The helical transmembrane segment at 46 to 66 (FGSPHLACYSLGICILLLNIL) threads the bilayer. Topologically, residues 67 to 93 (RSHCFTQAMMSQPKMEGLDNHTTYFLG) are cytoplasmic. Residues 94 to 114 (LAFLGWGFVFVLSSFYALGFT) form a helical membrane-spanning segment. 98–100 (GWG) contributes to the S-adenosyl-L-methionine binding site. Residues 115–157 (GTFLGDYFGILKESRVTTFPFSVLDNPMYWGSTANYLGWALMH) lie on the Lumenal side of the membrane. Residues 158 to 178 (ASPTGLLLTVLVAIVYVVALL) form a helical membrane-spanning segment. Topologically, residues 179–199 (YEEPFTAEIYRQKATRLHKRS) are cytoplasmic. 180–181 (EE) provides a ligand contact to S-adenosyl-L-methionine.

This sequence belongs to the class VI-like SAM-binding methyltransferase superfamily. PEMT/PEM2 methyltransferase family. In terms of tissue distribution, expressed in liver (at protein level).

It localises to the endoplasmic reticulum membrane. The protein localises to the mitochondrion membrane. The catalysed reaction is a 1,2-diacyl-sn-glycero-3-phospho-N-methylethanolamine + S-adenosyl-L-methionine = a 1,2-diacyl-sn-glycero-3-phospho-N,N-dimethylethanolamine + S-adenosyl-L-homocysteine + H(+). It catalyses the reaction a 1,2-diacyl-sn-glycero-3-phospho-N,N-dimethylethanolamine + S-adenosyl-L-methionine = a 1,2-diacyl-sn-glycero-3-phosphocholine + S-adenosyl-L-homocysteine + H(+). The enzyme catalyses a 1,2-diacyl-sn-glycero-3-phosphoethanolamine + S-adenosyl-L-methionine = a 1,2-diacyl-sn-glycero-3-phospho-N-methylethanolamine + S-adenosyl-L-homocysteine + H(+). It carries out the reaction 1,2-di-(9Z-octadecenoyl)-sn-glycero-3-phosphoethanolamine + S-adenosyl-L-methionine = 1,2-di-(9Z-octadecenoyl)-sn-glycero-3-phospho-N-methylethanolamine + S-adenosyl-L-homocysteine + H(+). The catalysed reaction is 1,2-di-(9Z-octadecenoyl)-sn-glycero-3-phospho-N-methylethanolamine + S-adenosyl-L-methionine = 1,2-di-(9Z-octadecenoyl)-sn-glycero-3-phospho-N,N-dimethylethanolamine + S-adenosyl-L-homocysteine + H(+). It catalyses the reaction 1,2-di-(9Z-octadecenoyl)-sn-glycero-3-phospho-N,N-dimethylethanolamine + S-adenosyl-L-methionine = 1,2-di-(9Z-octadecenoyl)-sn-glycero-3-phosphocholine + S-adenosyl-L-homocysteine + H(+). The enzyme catalyses 1,2-di-(9Z,12Z-octadecadienoyl)-sn-glycero-3-phosphoethanolamine + S-adenosyl-L-methionine = 1,2-di-(9Z,12Z-octadecadienoyl)-sn-glycero-3-phospho-N-methylethanolamine + S-adenosyl-L-homocysteine + H(+). It carries out the reaction 1,2-di-(9Z,12Z-octadecadienoyl)-sn-glycero-3-phospho-N-methylethanolamine + S-adenosyl-L-methionine = 1,2-di-(9Z,12Z-octadecadienoyl)-sn-glycero-3-phospho-N,N-dimethylethanolamine + S-adenosyl-L-homocysteine + H(+). The catalysed reaction is 1,2-di-(9Z,12Z-octadecadienoyl)-sn-glycero-3-phospho-N,N-dimethylethanolamine + S-adenosyl-L-methionine = 1,2-di-(9Z,12Z-octadecadienoyl)-sn-glycero-3-phosphocholine + S-adenosyl-L-homocysteine + H(+). It catalyses the reaction 1,2-di-(9Z,12Z,15Z-octadecatrienoyl)-sn-glycero-3-phosphoethanolamine + S-adenosyl-L-methionine = 1,2-di-(9Z,12Z,15Z-octadecatrienoyl)-sn-glycero-3-phospho-N-methylethanolamine + S-adenosyl-L-homocysteine + H(+). The enzyme catalyses 1,2-di-(9Z,12Z,15Z-octadecatrienoyl)-sn-glycero-3-phospho-N-methylethanolamine + S-adenosyl-L-methionine = 1,2-di-(9Z,12Z,15Z-octadecatrienoyl)-sn-glycero-3-phospho-N,N-dimethylethanolamine + S-adenosyl-L-homocysteine + H(+). It carries out the reaction 1,2-di-(9Z,12Z,15Z-octadecatrienoyl)-sn-glycero-3-phospho-N,N-dimethylethanolamine + S-adenosyl-L-methionine = 1,2-di-(9Z,12Z,15Z-octadecatrienoyl)-sn-glycero-3-phosphocholine + S-adenosyl-L-homocysteine + H(+). The catalysed reaction is 1-hexadecanoyl-2-(4Z,7Z,10Z,13Z,16Z,19Z-docosahexaenoyl)-sn-glycero-3-phosphoethanolamine + S-adenosyl-L-methionine = 1-hexadecanoyl-2-(4Z,7Z,10Z,13Z,16Z,19Z-docosahexaenoyl)-sn-glycero-3-phospho-N-methylethanolamine + S-adenosyl-L-homocysteine + H(+). It catalyses the reaction 1-hexadecanoyl-2-(4Z,7Z,10Z,13Z,16Z,19Z-docosahexaenoyl)-sn-glycero-3-phospho-N-methylethanolamine + S-adenosyl-L-methionine = 1-hexadecanoyl-2-(4Z,7Z,10Z,13Z,16Z,19Z-docosahexaenoyl)-sn-glycero-3-phospho-N,N-dimethylethanolamine + S-adenosyl-L-homocysteine + H(+). The enzyme catalyses 1-hexadecanoyl-2-(4Z,7Z,10Z,13Z,16Z,19Z-docosahexaenoyl)-sn-glycero-3-phospho-N,N-dimethylethanolamine + S-adenosyl-L-methionine = 1-hexadecanoyl-2-(4Z,7Z,10Z,13Z,16Z,19Z-docosahexaenoyl)-sn-glycero-3-phosphocholine + S-adenosyl-L-homocysteine + H(+). It functions in the pathway phospholipid metabolism; phosphatidylcholine biosynthesis. Functionally, catalyzes the three sequential steps of the methylation pathway for the biosynthesis of phosphatidylcholine, a critical and essential component for membrane structure. Uses S-adenosylmethionine (S-adenosyl-L-methionine, SAM or AdoMet) as the methyl group donor for the methylation of phosphatidylethanolamine (1,2-diacyl-sn-glycero-3-phosphoethanolamine, PE) to phosphatidylmonomethylethanolamine (1,2-diacyl-sn-glycero-3-phospho-N-methylethanolamine, PMME), PMME to phosphatidyldimethylethanolamine (1,2-diacyl-sn-glycero-3-phospho-N,N-dimethylethanolamine, PDME), and PDME to phosphatidylcholine (1,2-diacyl-sn-glycero-3-phosphocholine, PC), producing S-adenosyl-L-homocysteine in each step. In Mus musculus (Mouse), this protein is Phosphatidylethanolamine N-methyltransferase.